The following is a 557-amino-acid chain: Urocanate hydratase (557 aa).

NAD(+) is bound by residues 52 to 53, glutamine 130, 176 to 178, glutamate 196, arginine 201, 242 to 243, 263 to 267, 273 to 274, and tyrosine 322; these read GG, GMG, NA, QTSAH, and YL. The active site involves cysteine 410. Glycine 492 contributes to the NAD(+) binding site.

It belongs to the urocanase family. The cofactor is NAD(+).

It localises to the cytoplasm. It catalyses the reaction 4-imidazolone-5-propanoate = trans-urocanate + H2O. It participates in amino-acid degradation; L-histidine degradation into L-glutamate; N-formimidoyl-L-glutamate from L-histidine: step 2/3. In terms of biological role, catalyzes the conversion of urocanate to 4-imidazolone-5-propionate. The protein is Urocanate hydratase of Pseudoalteromonas translucida (strain TAC 125).